The sequence spans 127 residues: Cliotide T3 (127 aa).

The N-terminal stretch at 1 to 24 (MAYVRLTSLAVLFFLAASVMKTEG) is a signal peptide. Positions 25 to 53 (GLPTCGETCTLGTCYVPDCSCSWPICMKN) form a cross-link, cyclopeptide (Gly-Asn). 3 cysteine pairs are disulfide-bonded: cysteine 29–cysteine 43, cysteine 33–cysteine 45, and cysteine 38–cysteine 50. The propeptide at 54-127 (HIIAANAKTV…DLKMPLESTN (74 aa)) is removed in mature form.

In terms of processing, contains 3 disulfide bonds. Post-translationally, this is a cyclic peptide. As to expression, expressed in flower, stem, shoot, leaf and seed but not in root, pod and nodule (at protein level).

Probably participates in a plant defense mechanism. Not active against Gram-negative bacteria E.coli ATCC 700926, K.pneumoniae ATTC 13883 and P.aeruginosa ATCC 39018 at concentration up to 100 uM. Has cytotoxic and hemolytic activity. In Clitoria ternatea (Butterfly pea), this protein is Cliotide T3.